The chain runs to 214 residues: tRNA (guanine-N(7)-)-methyltransferase (214 aa).

S-adenosyl-L-methionine-binding residues include E43, E68, D95, and D117. D117 is an active-site residue. Substrate contacts are provided by residues K121, D153, and 190–193; that span reads TEYE.

The protein belongs to the class I-like SAM-binding methyltransferase superfamily. TrmB family.

It catalyses the reaction guanosine(46) in tRNA + S-adenosyl-L-methionine = N(7)-methylguanosine(46) in tRNA + S-adenosyl-L-homocysteine. It participates in tRNA modification; N(7)-methylguanine-tRNA biosynthesis. Its function is as follows. Catalyzes the formation of N(7)-methylguanine at position 46 (m7G46) in tRNA. The protein is tRNA (guanine-N(7)-)-methyltransferase of Staphylococcus aureus (strain JH1).